The sequence spans 523 residues: 2-isopropylmalate synthase (523 aa).

Residues 5 to 267 (VIIFDTTLRD…ETGINAKEIH (263 aa)) enclose the Pyruvate carboxyltransferase domain. Residues D14, H202, H204, and N238 each contribute to the Mn(2+) site. Positions 392 to 523 (KLQQLVVHSD…QQEKQVLGGV (132 aa)) are regulatory domain.

Belongs to the alpha-IPM synthase/homocitrate synthase family. LeuA type 1 subfamily. In terms of assembly, homodimer. Requires Mn(2+) as cofactor.

It localises to the cytoplasm. It catalyses the reaction 3-methyl-2-oxobutanoate + acetyl-CoA + H2O = (2S)-2-isopropylmalate + CoA + H(+). It functions in the pathway amino-acid biosynthesis; L-leucine biosynthesis; L-leucine from 3-methyl-2-oxobutanoate: step 1/4. Catalyzes the condensation of the acetyl group of acetyl-CoA with 3-methyl-2-oxobutanoate (2-ketoisovalerate) to form 3-carboxy-3-hydroxy-4-methylpentanoate (2-isopropylmalate). The sequence is that of 2-isopropylmalate synthase from Shewanella piezotolerans (strain WP3 / JCM 13877).